Consider the following 235-residue polypeptide: Adenosine 5'-phosphosulfate reductase (235 aa).

Residues C121, C122, C204, and C207 each contribute to the [4Fe-4S] cluster site. C230 acts as the Nucleophile; cysteine thiosulfonate intermediate in catalysis.

The protein belongs to the PAPS reductase family. CysH subfamily. The cofactor is [4Fe-4S] cluster.

It localises to the cytoplasm. It catalyses the reaction [thioredoxin]-disulfide + sulfite + AMP + 2 H(+) = adenosine 5'-phosphosulfate + [thioredoxin]-dithiol. It functions in the pathway sulfur metabolism; hydrogen sulfide biosynthesis; sulfite from sulfate. Catalyzes the formation of sulfite from adenosine 5'-phosphosulfate (APS) using thioredoxin as an electron donor. This is Adenosine 5'-phosphosulfate reductase from Geobacillus sp. (strain WCH70).